The primary structure comprises 461 residues: 23S rRNA (uracil(1939)-C(5))-methyltransferase RlmD (461 aa).

Residues Met-1–Lys-26 form a disordered region. The 59-residue stretch at Gln-20–Arg-78 folds into the TRAM domain. Cys-91, Cys-97, Cys-100, and Cys-179 together coordinate [4Fe-4S] cluster. S-adenosyl-L-methionine is bound by residues Gln-283, Phe-312, Asn-317, Glu-333, Asp-360, and Asp-381. Cys-407 functions as the Nucleophile in the catalytic mechanism.

The protein belongs to the class I-like SAM-binding methyltransferase superfamily. RNA M5U methyltransferase family. RlmD subfamily.

It carries out the reaction uridine(1939) in 23S rRNA + S-adenosyl-L-methionine = 5-methyluridine(1939) in 23S rRNA + S-adenosyl-L-homocysteine + H(+). Its function is as follows. Catalyzes the formation of 5-methyl-uridine at position 1939 (m5U1939) in 23S rRNA. This Pseudomonas fluorescens (strain Pf0-1) protein is 23S rRNA (uracil(1939)-C(5))-methyltransferase RlmD.